A 396-amino-acid polypeptide reads, in one-letter code: Cytochrome b (396 aa).

Transmembrane regions (helical) follow at residues 37-57, 81-102, 117-137, and 182-202; these read FGSL…ILAM, WLMR…YAHI, WNVG…GYVL, and FFTF…IHIM. Heme b-binding residues include His87 and His101. Residues His186 and His200 each contribute to the heme b site. An a ubiquinone-binding site is contributed by His205. Transmembrane regions (helical) follow at residues 230-250, 292-312, 324-344, and 351-371; these read FKDI…SLLA, LGGV…PFTH, LAQI…WLGG, and FILM…LVFP.

This sequence belongs to the cytochrome b family. The cytochrome bc1 complex contains 3 respiratory subunits (MT-CYB, CYC1 and UQCRFS1), 2 core proteins (UQCRC1 and UQCRC2) and probably 6 low-molecular weight proteins. It depends on heme b as a cofactor.

Its subcellular location is the mitochondrion inner membrane. Functionally, component of the ubiquinol-cytochrome c reductase complex (complex III or cytochrome b-c1 complex) that is part of the mitochondrial respiratory chain. The b-c1 complex mediates electron transfer from ubiquinol to cytochrome c. Contributes to the generation of a proton gradient across the mitochondrial membrane that is then used for ATP synthesis. This chain is Cytochrome b (mt-cyb), found in Petromyzon marinus (Sea lamprey).